The chain runs to 605 residues: Leucine-rich repeat-containing protein 40 (605 aa).

A disordered region spans residues Met1–Ala26. LRR repeat units follow at residues Asp83–Leu104, Ala106–Leu127, Asn129–Gln151, Asn152–Leu173, Ile175–Leu196, Gly198–Met219, Asn221–Met242, Ser244–Thr265, Lys266–Asn287, Ser290–Leu311, Gly313–Pro335, Asn336–Lys357, Phe429–Met450, Ser453–Leu475, Lys476–Met497, Arg499–Ile520, Thr522–Lys543, Lys546–Cys567, and Ser569–Lys590.

The chain is Leucine-rich repeat-containing protein 40 (lrrc40) from Xenopus tropicalis (Western clawed frog).